Consider the following 482-residue polypeptide: tRNA sulfurtransferase (482 aa).

The THUMP domain occupies Leu-61 to Arg-165. Residues Leu-183 to Ile-184, Lys-265, Gly-287, and Gln-296 contribute to the ATP site. An intrachain disulfide couples Cys-344 to Cys-456. The Rhodanese domain maps to Phe-404 to Pro-482. The active-site Cysteine persulfide intermediate is Cys-456.

It belongs to the ThiI family.

The protein resides in the cytoplasm. It catalyses the reaction [ThiI sulfur-carrier protein]-S-sulfanyl-L-cysteine + a uridine in tRNA + 2 reduced [2Fe-2S]-[ferredoxin] + ATP + H(+) = [ThiI sulfur-carrier protein]-L-cysteine + a 4-thiouridine in tRNA + 2 oxidized [2Fe-2S]-[ferredoxin] + AMP + diphosphate. It carries out the reaction [ThiS sulfur-carrier protein]-C-terminal Gly-Gly-AMP + S-sulfanyl-L-cysteinyl-[cysteine desulfurase] + AH2 = [ThiS sulfur-carrier protein]-C-terminal-Gly-aminoethanethioate + L-cysteinyl-[cysteine desulfurase] + A + AMP + 2 H(+). It participates in cofactor biosynthesis; thiamine diphosphate biosynthesis. Catalyzes the ATP-dependent transfer of a sulfur to tRNA to produce 4-thiouridine in position 8 of tRNAs, which functions as a near-UV photosensor. Also catalyzes the transfer of sulfur to the sulfur carrier protein ThiS, forming ThiS-thiocarboxylate. This is a step in the synthesis of thiazole, in the thiamine biosynthesis pathway. The sulfur is donated as persulfide by IscS. The polypeptide is tRNA sulfurtransferase (Salmonella typhi).